A 228-amino-acid polypeptide reads, in one-letter code: Ribosomal RNA small subunit methyltransferase G (228 aa).

S-adenosyl-L-methionine-binding positions include G89, L94, 140–141 (VE), and R159.

The protein belongs to the methyltransferase superfamily. RNA methyltransferase RsmG family.

Its subcellular location is the cytoplasm. The catalysed reaction is guanosine(527) in 16S rRNA + S-adenosyl-L-methionine = N(7)-methylguanosine(527) in 16S rRNA + S-adenosyl-L-homocysteine. Specifically methylates the N7 position of guanine in position 527 of 16S rRNA. This chain is Ribosomal RNA small subunit methyltransferase G, found in Burkholderia ambifaria (strain ATCC BAA-244 / DSM 16087 / CCUG 44356 / LMG 19182 / AMMD) (Burkholderia cepacia (strain AMMD)).